A 91-amino-acid chain; its full sequence is Protein YchS (91 aa).

In Escherichia coli O157:H7, this protein is Protein YchS (ychS).